The sequence spans 205 residues: Holliday junction branch migration complex subunit RuvA (205 aa).

The interval 1 to 64 (MIGRIRGLLV…EDAQLLYGFI (64 aa)) is domain I. Residues 65-143 (SKQERALFRL…SLMEASVGSE (79 aa)) are domain II. The tract at residues 144-156 (REFMLQSNYTAPV) is flexible linker. The tract at residues 157 to 205 (VANTAEEDAIAALLSLGYKPAQASKAVSAVYVDGIDSESLIKSALKSML) is domain III.

It belongs to the RuvA family. As to quaternary structure, homotetramer. Forms an RuvA(8)-RuvB(12)-Holliday junction (HJ) complex. HJ DNA is sandwiched between 2 RuvA tetramers; dsDNA enters through RuvA and exits via RuvB. An RuvB hexamer assembles on each DNA strand where it exits the tetramer. Each RuvB hexamer is contacted by two RuvA subunits (via domain III) on 2 adjacent RuvB subunits; this complex drives branch migration. In the full resolvosome a probable DNA-RuvA(4)-RuvB(12)-RuvC(2) complex forms which resolves the HJ.

The protein localises to the cytoplasm. The RuvA-RuvB-RuvC complex processes Holliday junction (HJ) DNA during genetic recombination and DNA repair, while the RuvA-RuvB complex plays an important role in the rescue of blocked DNA replication forks via replication fork reversal (RFR). RuvA specifically binds to HJ cruciform DNA, conferring on it an open structure. The RuvB hexamer acts as an ATP-dependent pump, pulling dsDNA into and through the RuvAB complex. HJ branch migration allows RuvC to scan DNA until it finds its consensus sequence, where it cleaves and resolves the cruciform DNA. In Shewanella piezotolerans (strain WP3 / JCM 13877), this protein is Holliday junction branch migration complex subunit RuvA.